A 284-amino-acid chain; its full sequence is Cell division protein DivIB (284 aa).

Basic and acidic residues predominate over residues 1 to 10 (MAWLRKKEQQ). The disordered stretch occupies residues 1–38 (MAWLRKKEQQSDPLTPWQQYQARQQQTPRHDRRQKPKL). Residues 1–56 (MAWLRKKEQQSDPLTPWQQYQARQQQTPRHDRRQKPKLDVNLPKIQTLRRRKLVKN) lie on the Cytoplasmic side of the membrane. The chain crosses the membrane as a helical span at residues 57–77 (LVLILLPLLLLLGVFGYFASP). The Extracellular portion of the chain corresponds to 78–284 (LSKVGLVSVQ…YSSSEKSSND (207 aa)). The POTRA domain occupies 79 to 150 (SKVGLVSVQG…NRIIIKTSEY (72 aa)).

Belongs to the FtsQ/DivIB family. DivIB subfamily.

The protein resides in the cell membrane. Its function is as follows. Cell division protein that may be involved in stabilizing or promoting the assembly of the division complex. The chain is Cell division protein DivIB from Lacticaseibacillus rhamnosus (strain ATCC 53103 / LMG 18243 / GG) (Lactobacillus rhamnosus).